Consider the following 682-residue polypeptide: DNA-directed RNA polymerase subunit beta' (682 aa).

4 residues coordinate Zn(2+): Cys69, Cys71, Cys87, and Cys90. 3 residues coordinate Mg(2+): Asp489, Asp491, and Asp493.

The protein belongs to the RNA polymerase beta' chain family. RpoC1 subfamily. In plastids the minimal PEP RNA polymerase catalytic core is composed of four subunits: alpha, beta, beta', and beta''. When a (nuclear-encoded) sigma factor is associated with the core the holoenzyme is formed, which can initiate transcription. The cofactor is Mg(2+). Zn(2+) is required as a cofactor.

Its subcellular location is the plastid. It is found in the chloroplast. It catalyses the reaction RNA(n) + a ribonucleoside 5'-triphosphate = RNA(n+1) + diphosphate. DNA-dependent RNA polymerase catalyzes the transcription of DNA into RNA using the four ribonucleoside triphosphates as substrates. This Vitis vinifera (Grape) protein is DNA-directed RNA polymerase subunit beta'.